A 241-amino-acid polypeptide reads, in one-letter code: 4-hydroxy-tetrahydrodipicolinate reductase (241 aa).

NAD(+)-binding positions include 80 to 82 (ATT) and 104 to 107 (SANM). H136 (proton donor/acceptor) is an active-site residue. H137 is a (S)-2,3,4,5-tetrahydrodipicolinate binding site. The Proton donor role is filled by K140. Residue 146-147 (GT) participates in (S)-2,3,4,5-tetrahydrodipicolinate binding.

This sequence belongs to the DapB family.

It is found in the cytoplasm. The catalysed reaction is (S)-2,3,4,5-tetrahydrodipicolinate + NAD(+) + H2O = (2S,4S)-4-hydroxy-2,3,4,5-tetrahydrodipicolinate + NADH + H(+). It carries out the reaction (S)-2,3,4,5-tetrahydrodipicolinate + NADP(+) + H2O = (2S,4S)-4-hydroxy-2,3,4,5-tetrahydrodipicolinate + NADPH + H(+). The protein operates within amino-acid biosynthesis; L-lysine biosynthesis via DAP pathway; (S)-tetrahydrodipicolinate from L-aspartate: step 4/4. Functionally, catalyzes the conversion of 4-hydroxy-tetrahydrodipicolinate (HTPA) to tetrahydrodipicolinate. This chain is 4-hydroxy-tetrahydrodipicolinate reductase, found in Staphylococcus haemolyticus (strain JCSC1435).